The following is a 460-amino-acid chain: Serine incorporator 5 (460 aa).

Residues 1-36 (MSARCCAGQLACCCGSAGCALCCGCCPKFRQSRSTR) lie on the Extracellular side of the membrane. The chain crosses the membrane as a helical span at residues 37–57 (FMYLFYFTLVIIPCCVMMSPS). Topologically, residues 58-89 (VMKQMTEHIPFFEDFCKGIKAGDTCENLVGYS) are cytoplasmic. Residues 90–110 (AVYRVCFGMACFFFVFCVLTF) form a helical membrane-spanning segment. Topologically, residues 111–124 (KVNNSKSCRASIHN) are extracellular. A glycan (N-linked (GlcNAc...) asparagine) is linked at asparagine 113. Residues 125 to 145 (GFWFFKLLLLGAMCSGAFFIP) form a helical membrane-spanning segment. Over 146–156 (DQETFLNVWRY) the chain is Cytoplasmic. Residues 157 to 177 (VGAVGSFFFICIQLLLIVEFA) traverse the membrane as a helical segment. At 178-197 (HKWNKNWTAGTVRNKLWYAS) the chain is on the extracellular side. An N-linked (GlcNAc...) asparagine glycan is attached at asparagine 183. Residues 198 to 218 (LSLALIMYSIAVGGLALMAVF) form a helical membrane-spanning segment. Topologically, residues 219-229 (YTQWDDCMDNK) are cytoplasmic. Residues 230–250 (ILLGVHGGLCVLISLAAISPC) traverse the membrane as a helical segment. The Extracellular portion of the chain corresponds to 251–258 (VQNRQPHS). A helical transmembrane segment spans residues 259–279 (GLLQPGLISCYVTYLTFSALT). Residues 280-309 (SKPEKVVKDEHGKNVTICVPDFGQDFRRDE) are Cytoplasmic-facing. Residues 310–330 (SMVTWLGTLLLVVCISYSCLT) traverse the membrane as a helical segment. The Extracellular portion of the chain corresponds to 331-390 (STTRSSSDALQRRYGAPELEVARCCFCFGPDGEDTEEQQNVKEGPRVIYDEKKGTVYSYS). A helical membrane pass occupies residues 391–411 (YFHFVLLLASLYVMMTLTSWF). At 412–427 (HYENATIETFFVGSWS) the chain is on the cytoplasmic side. A helical membrane pass occupies residues 428–448 (IFWVKMASCWMCVLLYLWTLV). The Extracellular portion of the chain corresponds to 449–460 (APLCCPSRQFSV).

It belongs to the TDE1 family. In terms of tissue distribution, brain. Expressed at high levels in the white matter and the oligodendroglial cells of the brain. Expressed at low levels in the liver.

It localises to the cell membrane. It catalyses the reaction a 1,2-diacyl-sn-glycero-3-phospho-L-serine(in) = a 1,2-diacyl-sn-glycero-3-phospho-L-serine(out). The catalysed reaction is a 1,2-diacyl-sn-glycero-3-phosphocholine(in) = a 1,2-diacyl-sn-glycero-3-phosphocholine(out). The enzyme catalyses a 1,2-diacyl-sn-glycero-3-phosphoethanolamine(in) = a 1,2-diacyl-sn-glycero-3-phosphoethanolamine(out). Its function is as follows. Restriction factor required to restrict infectivity of gammaretroviruses: acts by inhibiting an early step of viral infection. Impairs the penetration of the viral particle into the cytoplasm. Non-ATP-dependent, non-specific lipid transporter for phosphatidylserine, phosphatidylcholine, and phosphatidylethanolamine. Functions as a scramblase that flips lipids in both directions across the membrane. Phospholipid scrambling results in gammaretroviral surface exposure of phosphatidylserine and loss of membrane asymmetry, which leads to loss of infectivity. Enhances the incorporation of serine into phosphatidylserine and sphingolipids. May play a role in providing serine molecules for the formation of myelin glycosphingolipids in oligodendrocytes. This chain is Serine incorporator 5 (Serinc5), found in Rattus norvegicus (Rat).